The chain runs to 199 residues: Recombination protein RecR (199 aa).

A C4-type zinc finger spans residues 57–72 (CQSCRTFTEETYCPIC). The region spanning 81–176 (EVICVVETPA…TVSRIAHGVP (96 aa)) is the Toprim domain.

It belongs to the RecR family.

Functionally, may play a role in DNA repair. It seems to be involved in an RecBC-independent recombinational process of DNA repair. It may act with RecF and RecO. This is Recombination protein RecR from Shewanella pealeana (strain ATCC 700345 / ANG-SQ1).